The primary structure comprises 126 residues: SOSS complex subunit C homolog (126 aa).

The interval 106 to 126 (LEPLPSPATTPTAPPSHSISK) is disordered. A compositionally biased stretch (pro residues) spans 107 to 119 (EPLPSPATTPTAP).

It belongs to the SOSS-C family.

The polypeptide is SOSS complex subunit C homolog (Drosophila sechellia (Fruit fly)).